Here is a 224-residue protein sequence, read N- to C-terminus: Na(+)-translocating NADH-quinone reductase subunit D (224 aa).

5 helical membrane-spanning segments follow: residues 43 to 63, 67 to 87, 104 to 124, 132 to 152, and 179 to 199; these read TVMA…ISMI, IPSS…VIVV, VFVG…AFAM, FFDG…LGFV, and NGLL…IWAL.

The protein belongs to the NqrDE/RnfAE family. In terms of assembly, composed of six subunits; NqrA, NqrB, NqrC, NqrD, NqrE and NqrF.

The protein resides in the cell inner membrane. It catalyses the reaction a ubiquinone + n Na(+)(in) + NADH + H(+) = a ubiquinol + n Na(+)(out) + NAD(+). In terms of biological role, NQR complex catalyzes the reduction of ubiquinone-1 to ubiquinol by two successive reactions, coupled with the transport of Na(+) ions from the cytoplasm to the periplasm. NqrA to NqrE are probably involved in the second step, the conversion of ubisemiquinone to ubiquinol. This Pseudomonas aeruginosa (strain LESB58) protein is Na(+)-translocating NADH-quinone reductase subunit D.